The chain runs to 1469 residues: Protein BCL9 homolog (1469 aa).

The span at 1 to 16 (MLSTTMPRSPTQQQPQ) shows a compositional bias: polar residues. 5 disordered regions span residues 1-131 (MLST…NVSA), 161-187 (SNKA…KEEP), 200-222 (EERE…NAQD), 422-442 (ENSK…QSDP), and 454-474 (GGSS…DSIS). Position 9 is a phosphoserine (serine 9). At threonine 11 the chain carries Phosphothreonine. The segment covering 17–34 (PNSDASSTSASGSNPGAA) has biased composition (low complexity). Polar residues-rich tracts occupy residues 40–60 (SAAS…TLSP) and 90–113 (SGNN…NSCL). Low complexity predominate over residues 116 to 130 (SPQNSSEHSNSSNVS). A Phosphoserine modification is found at serine 206. Phosphothreonine is present on threonine 208. Serine 210 bears the Phosphoserine mark. 2 stretches are compositionally biased toward polar residues: residues 422–438 (ENSK…SFVD) and 455–474 (GSSN…DSIS). Residues 511 to 555 (SLQGVKVPDENLTPQQRQHREEQLAKIKKMNQFLFPENENSVGAN) form an ARM-binding region. Disordered regions lie at residues 728–830 (GGKP…TSTV), 844–913 (CFQA…RSPV), and 961–991 (QASA…PPPN). The span at 731-745 (PRQVTGTVVPQQQTP) shows a compositional bias: low complexity. Over residues 770–781 (IQRSASVPIATQ) the composition is skewed to polar residues. A compositionally biased stretch (low complexity) spans 782–796 (SPNPSSPNNLSLPSP). Polar residues-rich tracts occupy residues 806 to 830 (PTNS…TSTV) and 844 to 880 (CFQA…TPLS). Phosphoserine occurs at positions 883, 905, and 911. A compositionally biased stretch (polar residues) spans 904–913 (PSPQGQRSPV).

This sequence belongs to the BCL9 family. As to quaternary structure, binds to ARM and PYGO.

The protein localises to the nucleus. Functionally, involved in signal transduction through the Wnt pathway. This Drosophila melanogaster (Fruit fly) protein is Protein BCL9 homolog (lgs).